The sequence spans 207 residues: Thymidylate kinase (207 aa).

10–17 contacts ATP; sequence GIEGSGKS.

Belongs to the thymidylate kinase family.

The catalysed reaction is dTMP + ATP = dTDP + ADP. Its function is as follows. Phosphorylation of dTMP to form dTDP in both de novo and salvage pathways of dTTP synthesis. The polypeptide is Thymidylate kinase (Halothermothrix orenii (strain H 168 / OCM 544 / DSM 9562)).